The chain runs to 157 residues: Arginine repressor (157 aa).

Belongs to the ArgR family.

It is found in the cytoplasm. Its pathway is amino-acid biosynthesis; L-arginine biosynthesis [regulation]. In terms of biological role, regulates arginine biosynthesis genes. The polypeptide is Arginine repressor (Bacteroides thetaiotaomicron (strain ATCC 29148 / DSM 2079 / JCM 5827 / CCUG 10774 / NCTC 10582 / VPI-5482 / E50)).